Consider the following 629-residue polypeptide: Coiled-coil domain-containing protein 93 (629 aa).

The interval 1–23 (MGLPKGPEGQGLPEVETREDEEQ) is disordered. The sufficient for interaction with CCDC22 stretch occupies residues 1–428 (MGLPKGPEGQ…ETLKAERAPG (428 aa)). Coiled coils occupy residues 231 to 430 (LSAA…PGEK) and 558 to 599 (LRQM…LLEK). Phosphoserine occurs at positions 298, 301, and 305. The sufficient for interaction with WASHC2C stretch occupies residues 446–629 (THNEDLDRRY…LLSKIKAKAS (184 aa)).

The protein belongs to the CCDC93 family. As to quaternary structure, component of the commander complex consisting of the CCC subcomplex and the retriever subcomplex. Component of the CCC (COMMD/CCDC22/CCDC93) subcomplex consisting of COMMD1, COMMD2, COMMD3, COMMD4, COMMD5, COMMD6, COMMD7, COMMD8, COMMD9, COMMD10, CCDC22 and CCDC93. Forms a coiled-coil heterodimer with CCDC22; this heterodimer interacts with the guanine nucleotide exchange factor DENND10; the interaction is direct. Interacts with WASHC1. Interacts directly with WASHC2C. Interacts with SNX17 and SNX31.

The protein localises to the early endosome. Functionally, component of the commander complex that is essential for endosomal recycling of transmembrane cargos; the commander complex is composed of composed of the CCC subcomplex and the retriever subcomplex. Component of the CCC complex, which is involved in the regulation of endosomal recycling of surface proteins, including integrins, signaling receptor and channels. The CCC complex associates with SNX17, retriever and WASH complexes to prevent lysosomal degradation and promote cell surface recycling of numerous cargos such as integrins ITGA5:ITGB1. Involved in copper-dependent ATP7A trafficking between the trans-Golgi network and vesicles in the cell periphery; the function is proposed to depend on its association within the CCC complex and cooperation with the WASH complex on early endosomes and is dependent on its interaction with WASHC2C. The polypeptide is Coiled-coil domain-containing protein 93 (Ccdc93) (Mus musculus (Mouse)).